We begin with the raw amino-acid sequence, 364 residues long: Leucine dehydrogenase (364 aa).

The active site involves K80. 180–186 is an NAD(+) binding site; it reads GVGNVAY.

This sequence belongs to the Glu/Leu/Phe/Val dehydrogenases family.

The enzyme catalyses L-leucine + NAD(+) + H2O = 4-methyl-2-oxopentanoate + NH4(+) + NADH + H(+). The protein operates within amino-acid degradation; L-leucine degradation; 4-methyl-2-oxopentanoate from L-leucine (dehydrogenase route): step 1/1. Functionally, catalyzes the reversible deamination of L-leucine to 4-methyl-2-oxopentanoate. The chain is Leucine dehydrogenase (yqiT) from Bacillus subtilis (strain 168).